The sequence spans 211 residues: MTDDTKKPGPDADVAEEFVDPAQAGEEQAETAEPDPVELLKAENADLRDKFLRLAAEMDNLRRRTERDVKDAKAYSLAGFARDMLAVSDNLRRALEAIPDELKTNGEAGLNGLIEGVEMTERSMLSTLERHGVKKIDAEGQKFDPNFHQAMFEVPNTAVPNNTVLQVIQAGFTIGDRVLRPAMVGVAKGGPKAEPSASAEPGTSSLNEKDA.

Over residues 1-10 (MTDDTKKPGP) the composition is skewed to basic and acidic residues. Disordered regions lie at residues 1-37 (MTDDTKKPGPDADVAEEFVDPAQAGEEQAETAEPDPV) and 187-211 (AKGGPKAEPSASAEPGTSSLNEKDA). Residues 27–36 (EQAETAEPDP) show a composition bias toward acidic residues. Residues 201-211 (PGTSSLNEKDA) are compositionally biased toward polar residues.

Belongs to the GrpE family. As to quaternary structure, homodimer.

Its subcellular location is the cytoplasm. Functionally, participates actively in the response to hyperosmotic and heat shock by preventing the aggregation of stress-denatured proteins, in association with DnaK and GrpE. It is the nucleotide exchange factor for DnaK and may function as a thermosensor. Unfolded proteins bind initially to DnaJ; upon interaction with the DnaJ-bound protein, DnaK hydrolyzes its bound ATP, resulting in the formation of a stable complex. GrpE releases ADP from DnaK; ATP binding to DnaK triggers the release of the substrate protein, thus completing the reaction cycle. Several rounds of ATP-dependent interactions between DnaJ, DnaK and GrpE are required for fully efficient folding. This Agrobacterium fabrum (strain C58 / ATCC 33970) (Agrobacterium tumefaciens (strain C58)) protein is Protein GrpE.